The sequence spans 545 residues: Probable bifunctional tRNA threonylcarbamoyladenosine biosynthesis protein (545 aa).

Positions 1 to 329 (MDTSKDLICI…YRSDMVEVNW (329 aa)) are kae1. Positions 112, 116, and 133 each coordinate Fe cation. L-threonylcarbamoyladenylate contacts are provided by residues 133-137 (YVSGG), aspartate 165, glycine 178, glutamate 182, and asparagine 262. Residue aspartate 290 coordinates Fe cation. A Protein kinase domain is found at 344-545 (IIPEHLIGKG…KEVEKRARYL (202 aa)). Residues 350–358 (IGKGAEADI) and lysine 371 contribute to the ATP site. Aspartate 463 functions as the Proton acceptor; for kinase activity in the catalytic mechanism.

In the N-terminal section; belongs to the KAE1 / TsaD family. It in the C-terminal section; belongs to the protein kinase superfamily. Tyr protein kinase family. BUD32 subfamily. As to quaternary structure, component of the KEOPS complex that consists of Kae1, Bud32, Cgi121 and Pcc1; the whole complex dimerizes. The cofactor is Fe(2+).

The protein localises to the cytoplasm. The enzyme catalyses L-seryl-[protein] + ATP = O-phospho-L-seryl-[protein] + ADP + H(+). The catalysed reaction is L-threonyl-[protein] + ATP = O-phospho-L-threonyl-[protein] + ADP + H(+). It catalyses the reaction L-threonylcarbamoyladenylate + adenosine(37) in tRNA = N(6)-L-threonylcarbamoyladenosine(37) in tRNA + AMP + H(+). In terms of biological role, required for the formation of a threonylcarbamoyl group on adenosine at position 37 (t(6)A37) in tRNAs that read codons beginning with adenine. Is a component of the KEOPS complex that is probably involved in the transfer of the threonylcarbamoyl moiety of threonylcarbamoyl-AMP (TC-AMP) to the N6 group of A37. The Kae1 domain likely plays a direct catalytic role in this reaction. The Bud32 domain probably displays kinase activity that regulates Kae1 function. In Methanococcus maripaludis (strain C5 / ATCC BAA-1333), this protein is Probable bifunctional tRNA threonylcarbamoyladenosine biosynthesis protein.